A 617-amino-acid chain; its full sequence is Glutamyl-tRNA(Gln) amidotransferase subunit E (617 aa).

This sequence belongs to the GatB/GatE family. GatE subfamily. Heterodimer of GatD and GatE.

It carries out the reaction L-glutamyl-tRNA(Gln) + L-glutamine + ATP + H2O = L-glutaminyl-tRNA(Gln) + L-glutamate + ADP + phosphate + H(+). Its function is as follows. Allows the formation of correctly charged Gln-tRNA(Gln) through the transamidation of misacylated Glu-tRNA(Gln) in organisms which lack glutaminyl-tRNA synthetase. The reaction takes place in the presence of glutamine and ATP through an activated gamma-phospho-Glu-tRNA(Gln). The GatDE system is specific for glutamate and does not act on aspartate. This chain is Glutamyl-tRNA(Gln) amidotransferase subunit E, found in Natronomonas pharaonis (strain ATCC 35678 / DSM 2160 / CIP 103997 / JCM 8858 / NBRC 14720 / NCIMB 2260 / Gabara) (Halobacterium pharaonis).